Reading from the N-terminus, the 423-residue chain is Adenylosuccinate synthetase (423 aa).

GTP-binding positions include 12 to 18 and 40 to 42; these read GDEGKGK and GHT. The active-site Proton acceptor is Asp-13. Residues Asp-13 and Gly-40 each coordinate Mg(2+). Residues 13–16, 38–41, Thr-129, Arg-143, Gln-224, Thr-239, and Arg-303 contribute to the IMP site; these read DEGK and NAGH. The active-site Proton donor is the His-41. 299–305 lines the substrate pocket; sequence ATTGRKR. GTP-binding positions include Arg-305, 331–333, and 412–414; these read KGD and SVG.

It belongs to the adenylosuccinate synthetase family. Homodimer. Mg(2+) serves as cofactor.

The protein resides in the cytoplasm. The catalysed reaction is IMP + L-aspartate + GTP = N(6)-(1,2-dicarboxyethyl)-AMP + GDP + phosphate + 2 H(+). Its pathway is purine metabolism; AMP biosynthesis via de novo pathway; AMP from IMP: step 1/2. In terms of biological role, plays an important role in the de novo pathway of purine nucleotide biosynthesis. Catalyzes the first committed step in the biosynthesis of AMP from IMP. The polypeptide is Adenylosuccinate synthetase (Christiangramia forsetii (strain DSM 17595 / CGMCC 1.15422 / KT0803) (Gramella forsetii)).